The following is a 349-amino-acid chain: Selenide, water dikinase (349 aa).

Residue Cys17 is part of the active site. Residues Lys20 and 48-50 each bind ATP; that span reads MAD. Asp51 serves as a coordination point for Mg(2+). Residues Asp68, Asp91, and 139 to 141 contribute to the ATP site; that span reads GHS. Asp91 lines the Mg(2+) pocket. Residue Asp227 coordinates Mg(2+).

The protein belongs to the selenophosphate synthase 1 family. Class I subfamily. In terms of assembly, homodimer. Mg(2+) serves as cofactor.

It catalyses the reaction hydrogenselenide + ATP + H2O = selenophosphate + AMP + phosphate + 2 H(+). Functionally, synthesizes selenophosphate from selenide and ATP. In Rhizobium meliloti (strain 1021) (Ensifer meliloti), this protein is Selenide, water dikinase.